Consider the following 356-residue polypeptide: Peptide chain release factor 1 (356 aa).

Gln-233 bears the N5-methylglutamine mark.

Belongs to the prokaryotic/mitochondrial release factor family. Methylated by PrmC. Methylation increases the termination efficiency of RF1.

It localises to the cytoplasm. In terms of biological role, peptide chain release factor 1 directs the termination of translation in response to the peptide chain termination codons UAG and UAA. This Syntrophotalea carbinolica (strain DSM 2380 / NBRC 103641 / GraBd1) (Pelobacter carbinolicus) protein is Peptide chain release factor 1.